The sequence spans 901 residues: Protein translocase subunit SecA (901 aa).

Residues glutamine 87, 105-109 (GEGKT), and aspartate 512 contribute to the ATP site. Residues 839-901 (QMEEQRRQES…KYKQCHGRLA (63 aa)) form a disordered region. The span at 841–850 (EEQRRQESER) shows a compositional bias: basic and acidic residues. Zn(2+) contacts are provided by cysteine 885, cysteine 887, cysteine 896, and histidine 897. Residues 891-901 (KKYKQCHGRLA) show a composition bias toward basic residues.

The protein belongs to the SecA family. In terms of assembly, monomer and homodimer. Part of the essential Sec protein translocation apparatus which comprises SecA, SecYEG and auxiliary proteins SecDF-YajC and YidC. Requires Zn(2+) as cofactor.

Its subcellular location is the cell inner membrane. It localises to the cytoplasm. The enzyme catalyses ATP + H2O + cellular proteinSide 1 = ADP + phosphate + cellular proteinSide 2.. In terms of biological role, part of the Sec protein translocase complex. Interacts with the SecYEG preprotein conducting channel. Has a central role in coupling the hydrolysis of ATP to the transfer of proteins into and across the cell membrane, serving both as a receptor for the preprotein-SecB complex and as an ATP-driven molecular motor driving the stepwise translocation of polypeptide chains across the membrane. This Erwinia tasmaniensis (strain DSM 17950 / CFBP 7177 / CIP 109463 / NCPPB 4357 / Et1/99) protein is Protein translocase subunit SecA.